The following is a 549-amino-acid chain: Limonene dehydrogenase subunit B (549 aa).

It belongs to the carotenoid/retinoid oxidoreductase family. As to quaternary structure, heterodimer composed of CtmA and CtmB. Requires FAD as cofactor.

It is found in the cytoplasm. It carries out the reaction (4S)-limonene + A + H2O = (4S)-perillyl alcohol + AH2. It catalyses the reaction (4R)-limonene + A + H2O = (4R)-perillyl alcohol + AH2. It functions in the pathway terpene metabolism; monoterpene degradation. Its activity is regulated as follows. The presence of molecular oxygen causes a 40% reduction in specific activity. Involved in the degradation of the cyclic monoterpene limonene. Catalyzes the oxidation of limonene at the primary methyl group, forming perillyl alcohol. Hydroxylates the R- and S-enantiomers to their respective enantiomeric form of perillyl alcohol at a similar rate. Native CtmAB oxidizes a wide range of monocyclic monoterpenes containing the allylic methyl group motif (1-methyl-cyclohex-1-ene). Can also catalyze the reverse reaction, the reduction of perillyl alcohol to limonene, but with lower efficiency. Cannot use molecular oxygen as an electron acceptor. The natural electron acceptor is likely a heterodimeric electron transfer flavoprotein (ETF). The protein is Limonene dehydrogenase subunit B of Castellaniella defragrans (strain DSM 12143 / CCUG 39792 / 65Phen) (Alcaligenes defragrans).